The chain runs to 130 residues: EG45-like domain containing protein 2 (130 aa).

An N-terminal signal peptide occupies residues 1-25 (MIKMAVKFVVVMIVFAQILAPIAEA). An Expansin-like EG45 domain is found at 28–130 (GKAVYYDPPY…GNIRVVYTPI (103 aa)). N-linked (GlcNAc...) asparagine glycosylation is present at Asn-106.

As to expression, expressed in unstressed leaves.

The protein resides in the secreted. Plays a systemic role in water and solute homeostasis. The protein is EG45-like domain containing protein 2 (EGC2) of Arabidopsis thaliana (Mouse-ear cress).